Reading from the N-terminus, the 217-residue chain is Pyridoxine/pyridoxamine 5'-phosphate oxidase (217 aa).

Substrate-binding positions include 13–16 (RREY) and lysine 71. Residues 66 to 71 (RIVLLK), 81 to 82 (YT), arginine 87, lysine 88, and glutamine 110 each bind FMN. Residues tyrosine 128, arginine 132, and serine 136 each contribute to the substrate site. Residues 145-146 (QS) and tryptophan 190 each bind FMN. Residue 196 to 198 (RLH) coordinates substrate. Residue arginine 200 participates in FMN binding.

This sequence belongs to the pyridoxamine 5'-phosphate oxidase family. In terms of assembly, homodimer. The cofactor is FMN.

It catalyses the reaction pyridoxamine 5'-phosphate + O2 + H2O = pyridoxal 5'-phosphate + H2O2 + NH4(+). The enzyme catalyses pyridoxine 5'-phosphate + O2 = pyridoxal 5'-phosphate + H2O2. It functions in the pathway cofactor metabolism; pyridoxal 5'-phosphate salvage; pyridoxal 5'-phosphate from pyridoxamine 5'-phosphate: step 1/1. The protein operates within cofactor metabolism; pyridoxal 5'-phosphate salvage; pyridoxal 5'-phosphate from pyridoxine 5'-phosphate: step 1/1. In terms of biological role, catalyzes the oxidation of either pyridoxine 5'-phosphate (PNP) or pyridoxamine 5'-phosphate (PMP) into pyridoxal 5'-phosphate (PLP). This chain is Pyridoxine/pyridoxamine 5'-phosphate oxidase, found in Proteus mirabilis (strain HI4320).